Consider the following 935-residue polypeptide: Progesterone receptor (935 aa).

Positions 1–164 are AF3; mediates transcriptional activation; sequence MTELKAKGPR…PATQGVLSPL (164 aa). The segment at 1 to 254 is disordered; that stretch reads MTELKAKGPR…GGAAAGGGAA (254 aa). The interval 1–568 is modulating, Pro-Rich; sequence MTELKAKGPR…YSFESLPQKI (568 aa). Ser-20 is subject to Phosphoserine. The LXXL motif 1 motif lies at 55 to 59; the sequence is LDGLL. Ser-81 bears the Phosphoserine mark. The LXXL motif 2 motif lies at 115-119; it reads LDTLL. A phosphoserine mark is found at Ser-130 and Ser-162. Residues 165–305 form a mediates transcriptional transrepression region; the sequence is MSRSGGKAGD…LATTVMDFIH (141 aa). The Nuclear localization signal motif lies at 183–187; the sequence is KVLPR. A phosphoserine mark is found at Ser-190 and Ser-213. Residues 220–231 are compositionally biased toward acidic residues; the sequence is EVEEEDGSESED. Residues 232–246 show a composition bias toward low complexity; the sequence is SAGPLLKGKPRALGG. Ser-294 carries the post-translational modification Phosphoserine; by MAPK1. The disordered stretch occupies residues 331–378; that stretch reads GGAGAASAFAPPRSSPSASSTPVAVGDFPDCAYPPDAEPKDDAYPLYS. Residues 335–350 show a composition bias toward low complexity; that stretch reads AASAFAPPRSSPSASS. Ser-345 is modified (phosphoserine; by MAPK). Residue Lys-388 forms a Glycyl lysine isopeptide (Lys-Gly) (interchain with G-Cter in SUMO); alternate linkage. Residue Lys-388 forms a Glycyl lysine isopeptide (Lys-Gly) (interchain with G-Cter in ubiquitin); alternate linkage. Residue Ser-400 is modified to Phosphoserine; by CDK2. Positions 418-430 are enriched in pro residues; it reads PLGPPPPLPPRAP. The disordered stretch occupies residues 418–438; it reads PLGPPPPLPPRAPPTRAGEAA. Positions 456-548 are AF1; mediates transcriptional activation; that stretch reads STLECILYKA…VYPPYLNYLR (93 aa). Residue Lys-533 forms a Glycyl lysine isopeptide (Lys-Gly) (interchain with G-Cter in SUMO) linkage. NR C4-type zinc fingers lie at residues 569 to 589 and 605 to 629; these read CLIC…CGSC and CAGR…LRKC. The nuclear receptor DNA-binding region spans 569-641; the sequence is CLICGDEASG…AGMVLGGRKF (73 aa). Ser-678 bears the Phosphoserine mark. The NR LBD domain occupies 681–915; it reads QDIQLIPPLI…EFPEMMSEVI (235 aa). Positions 689–935 are AF2; mediates transcriptional activation; it reads LINLLMSIEP…MVKPLLFHKK (247 aa).

It belongs to the nuclear hormone receptor family. Interacts with SMARD1 and UNC45A. Interacts with CUEDC2; the interaction promotes ubiquitination, decreases sumoylation, and represses transcriptional activity. Interacts with PIAS3; the interaction promotes sumoylation of PR in a hormone-dependent manner, inhibits DNA-binding, and alters nuclear export. Interacts with SP1; the interaction requires ligand-induced phosphorylation on Ser-345 by ERK1/2-MAPK. Interacts with PRMT2. Interacts with NCOA2 and NCOA1. Interacts with KLF9. Interacts with GTF2B. Post-translationally, phosphorylated on multiple serine sites. Several of these sites are hormone-dependent. Phosphorylation on Ser-294 is highly hormone-dependent and modulates ubiquitination and sumoylation on Lys-388. Phosphorylation on Ser-102 and Ser-345 also requires induction by hormone. Basal phosphorylation on Ser-81, Ser-162, Ser-190 and Ser-400 is increased in response to progesterone and can be phosphorylated in vitro by the CDK2-A1 complex. Increased levels of phosphorylation on Ser-400 also in the presence of EGF, heregulin, IGF, PMA and FBS. Phosphorylation at this site by CDK2 is ligand-independent, and increases nuclear translocation and transcriptional activity. Phosphorylation at Ser-162 and Ser-294, but not at Ser-190, is impaired during the G(2)/M phase of the cell cycle. Phosphorylation on Ser-345 by ERK1/2 MAPK is required for interaction with SP1. In terms of processing, sumoylation is hormone-dependent and represses transcriptional activity. Sumoylation on all three sites is enhanced by PIAS3. Desumoylated by SENP1. Sumoylation on Lys-388, the main site of sumoylation, is repressed by ubiquitination on the same site, and modulated by phosphorylation at Ser-294. Ubiquitination is hormone-dependent and represses sumoylation on the same site. Promoted by MAPK-mediated phosphorylation on Ser-294. Post-translationally, palmitoylated by ZDHHC7 and ZDHHC21. Palmitoylation is required for plasma membrane targeting and for rapid intracellular signaling via ERK and AKT kinases and cAMP generation.

It localises to the nucleus. Its subcellular location is the cytoplasm. Functionally, the steroid hormones and their receptors are involved in the regulation of eukaryotic gene expression and affect cellular proliferation and differentiation in target tissues. Transcriptional activator of several progesteron-dependent promoters in a variety of cell types. Involved in activation of SRC-dependent MAPK signaling on hormone stimulation. The chain is Progesterone receptor (PGR) from Pongo pygmaeus (Bornean orangutan).